Here is a 224-residue protein sequence, read N- to C-terminus: uncharacterized protein (224 aa).

The signal sequence occupies residues Met-1–Ala-16.

This is an uncharacterized protein from Escherichia coli.